A 420-amino-acid polypeptide reads, in one-letter code: UDP-N-acetylglucosamine 1-carboxyvinyltransferase (420 aa).

22–23 (KN) contributes to the phosphoenolpyruvate binding site. Arg92 contacts UDP-N-acetyl-alpha-D-glucosamine. Cys116 functions as the Proton donor in the catalytic mechanism. Cys116 carries the 2-(S-cysteinyl)pyruvic acid O-phosphothioketal modification. Asp306 and Ile328 together coordinate UDP-N-acetyl-alpha-D-glucosamine.

It belongs to the EPSP synthase family. MurA subfamily.

It localises to the cytoplasm. The enzyme catalyses phosphoenolpyruvate + UDP-N-acetyl-alpha-D-glucosamine = UDP-N-acetyl-3-O-(1-carboxyvinyl)-alpha-D-glucosamine + phosphate. It functions in the pathway cell wall biogenesis; peptidoglycan biosynthesis. In terms of biological role, cell wall formation. Adds enolpyruvyl to UDP-N-acetylglucosamine. This is UDP-N-acetylglucosamine 1-carboxyvinyltransferase from Blochmanniella floridana.